We begin with the raw amino-acid sequence, 126 residues long: MISFHVIFLSLGRGKLFLPVNFCFLKLKNSQVRIPKDFTCNLHVLFRTVQGEDRNTMFRGHWSIYSRNFPLAVVPAYVTEDGKNTSHRASGQFCNALSQGEIPSSLQLVNSYALEPRTDMPCNFLT.

This is an uncharacterized protein from Homo sapiens (Human).